A 328-amino-acid polypeptide reads, in one-letter code: 4-hydroxythreonine-4-phosphate dehydrogenase (328 aa).

Positions 135 and 136 each coordinate substrate. H165, H210, and H265 together coordinate a divalent metal cation. Residues K273, N282, and R291 each contribute to the substrate site.

The protein belongs to the PdxA family. In terms of assembly, homodimer. Zn(2+) serves as cofactor. It depends on Mg(2+) as a cofactor. The cofactor is Co(2+).

It is found in the cytoplasm. The catalysed reaction is 4-(phosphooxy)-L-threonine + NAD(+) = 3-amino-2-oxopropyl phosphate + CO2 + NADH. It functions in the pathway cofactor biosynthesis; pyridoxine 5'-phosphate biosynthesis; pyridoxine 5'-phosphate from D-erythrose 4-phosphate: step 4/5. Catalyzes the NAD(P)-dependent oxidation of 4-(phosphooxy)-L-threonine (HTP) into 2-amino-3-oxo-4-(phosphooxy)butyric acid which spontaneously decarboxylates to form 3-amino-2-oxopropyl phosphate (AHAP). The protein is 4-hydroxythreonine-4-phosphate dehydrogenase of Pseudomonas aeruginosa (strain ATCC 15692 / DSM 22644 / CIP 104116 / JCM 14847 / LMG 12228 / 1C / PRS 101 / PAO1).